Consider the following 325-residue polypeptide: GMP reductase (325 aa).

Catalysis depends on cysteine 173, which acts as the Thioimidate intermediate. Isoleucine 202–valine 225 is a binding site for NADP(+).

The protein belongs to the IMPDH/GMPR family. GuaC type 2 subfamily.

The catalysed reaction is IMP + NH4(+) + NADP(+) = GMP + NADPH + 2 H(+). Functionally, catalyzes the irreversible NADPH-dependent deamination of GMP to IMP. It functions in the conversion of nucleobase, nucleoside and nucleotide derivatives of G to A nucleotides, and in maintaining the intracellular balance of A and G nucleotides. The sequence is that of GMP reductase from Variovorax paradoxus (strain S110).